A 1148-amino-acid chain; its full sequence is Autophagy-related protein 11 (1148 aa).

The short motif at 567-570 (FDDI) is the AIM (Atg8-family-interacting motif) element. Basic and acidic residues predominate over residues 699–710 (KAEASSDVEGNK). 3 disordered regions span residues 699 to 727 (KAEA…CVSN), 754 to 777 (PLDS…EAGE), and 784 to 803 (NSST…ATGR). 2 stretches are compositionally biased toward polar residues: residues 754–767 (PLDS…QNNE) and 784–793 (NSSTAESPQK). Coiled coils occupy residues 816–868 (ELRN…HLEN) and 956–996 (DKVS…VKTL). Thr851 is modified (phosphothreonine). Positions 1130-1133 (YFIV) match the AIM (Atg8-family-interacting motif) motif.

It belongs to the ATG11 family. In terms of assembly, homodimer. Interacts with ATG8E, ATG13A and ATG101. Binds to ATG8E on autophagic vesicles.

It is found in the cytoplasmic vesicle. Its subcellular location is the autophagosome. Its function is as follows. Accessory protein involved in autophagy. Acts as a scaffold protein of the ATG1-ATG13 complex for faithful delivery of autophagic vesicles to the vacuole. Involved in the stress-induced phosphorylation of ATG1A for turnover of ATG1-ATG13 complex and proper ATG1-ATG13 complex assembly or activity. Required for selective mitophagy. Required for senescence-induced breakdown of mitochondria-resident proteins and mitochondrial vesicles. Seems not essential for ATG8-mediated autophagy. The chain is Autophagy-related protein 11 from Arabidopsis thaliana (Mouse-ear cress).